The following is a 469-amino-acid chain: MNPNQKIITIGSVSLTIATVCFLMQIAILATTVTLHFKQNECNPPANNQVVPCEPIIIERNITEIVYLNNITIEKEVCPEVAEYRNWSKPQCQITGFAPFSKDNSVRLSAGGDIWVTREPYVSCDPGKCYQFALGQGTTLDNKHSNGTIHDRIPHRTLLMNELGVPFHLGTKQVCIAWSSSSCHDGKAWLHVCVTGDDRNATASFIYDGMLVDSIGSWSQNILRTQESECVCINGTCTVVMTDGSASGNADTRVLFIREGKIIHISPLSGSAQHIEECSCYPRYPDVRCVCRDNWKGSNRPVIDIKMADYSINSGYVCSGLVGDTPRSDDSSSNSNCRDPNNERGNPGVKGWAFDNGDDVWMGRTISKDSRSGYETFRVIGGWTTPNSKSQVNRQVIVDSNNWSGYSGIFSVEGKSCINRCFYVELIRGRPQETRVWWTSNSIVVFCGTSGTYGTGSWPDGANINFMPI.

The Intravirion portion of the chain corresponds to 1-6; the sequence is MNPNQK. The helical transmembrane segment at 7 to 29 threads the bilayer; that stretch reads IITIGSVSLTIATVCFLMQIAIL. Residues 11–33 are involved in apical transport and lipid raft association; that stretch reads GSVSLTIATVCFLMQIAILATTV. At 30-469 the chain is on the virion surface side; the sequence is ATTVTLHFKQ…DGANINFMPI (440 aa). The tract at residues 36 to 88 is hypervariable stalk region; the sequence is HFKQNECNPPANNQVVPCEPIIIERNITEIVYLNNITIEKEVCPEVAEYRNWS. 3 N-linked (GlcNAc...) asparagine; by host glycosylation sites follow: asparagine 61, asparagine 70, and asparagine 86. Residues 91–469 form a head of neuraminidase region; the sequence is QCQITGFAPF…DGANINFMPI (379 aa). Disulfide bonds link cysteine 92–cysteine 417, cysteine 124–cysteine 129, cysteine 183–cysteine 230, cysteine 232–cysteine 237, cysteine 278–cysteine 291, cysteine 280–cysteine 289, cysteine 318–cysteine 337, and cysteine 421–cysteine 447. Arginine 118 contributes to the substrate binding site. A glycan (N-linked (GlcNAc...) asparagine; by host) is linked at asparagine 146. Residue aspartate 151 is the Proton donor/acceptor of the active site. Arginine 152 serves as a coordination point for substrate. Residues asparagine 200 and asparagine 234 are each glycosylated (N-linked (GlcNAc...) asparagine; by host). Residue 276 to 277 participates in substrate binding; it reads EE. Residue arginine 292 coordinates substrate. Ca(2+) contacts are provided by aspartate 293, glycine 297, and aspartate 324. A disordered region spans residues 324-349; that stretch reads DTPRSDDSSSNSNCRDPNNERGNPGV. Arginine 371 contributes to the substrate binding site. Asparagine 402 carries an N-linked (GlcNAc...) asparagine; by host glycan. Tyrosine 406 (nucleophile) is an active-site residue.

This sequence belongs to the glycosyl hydrolase 34 family. As to quaternary structure, homotetramer. Ca(2+) is required as a cofactor. In terms of processing, N-glycosylated.

Its subcellular location is the virion membrane. It is found in the host apical cell membrane. The enzyme catalyses Hydrolysis of alpha-(2-&gt;3)-, alpha-(2-&gt;6)-, alpha-(2-&gt;8)- glycosidic linkages of terminal sialic acid residues in oligosaccharides, glycoproteins, glycolipids, colominic acid and synthetic substrates.. Inhibited by the neuraminidase inhibitors zanamivir (Relenza) and oseltamivir (Tamiflu). These drugs interfere with the release of progeny virus from infected cells and are effective against all influenza strains. Resistance to neuraminidase inhibitors is quite rare. Its function is as follows. Catalyzes the removal of terminal sialic acid residues from viral and cellular glycoconjugates. Cleaves off the terminal sialic acids on the glycosylated HA during virus budding to facilitate virus release. Additionally helps virus spread through the circulation by further removing sialic acids from the cell surface. These cleavages prevent self-aggregation and ensure the efficient spread of the progeny virus from cell to cell. Otherwise, infection would be limited to one round of replication. Described as a receptor-destroying enzyme because it cleaves a terminal sialic acid from the cellular receptors. May facilitate viral invasion of the upper airways by cleaving the sialic acid moieties on the mucin of the airway epithelial cells. Likely to plays a role in the budding process through its association with lipid rafts during intracellular transport. May additionally display a raft-association independent effect on budding. Plays a role in the determination of host range restriction on replication and virulence. Sialidase activity in late endosome/lysosome traffic seems to enhance virus replication. This Influenza A virus (strain A/Turkey/Wisconsin/1/1966 H9N2) protein is Neuraminidase.